The following is a 411-amino-acid chain: Serine hydroxymethyltransferase (411 aa).

Residues Leu-117 and 121–123 (GHL) each bind (6S)-5,6,7,8-tetrahydrofolate. An N6-(pyridoxal phosphate)lysine modification is found at Lys-226. (6S)-5,6,7,8-tetrahydrofolate contacts are provided by residues Glu-241 and 349–351 (SPF).

This sequence belongs to the SHMT family. As to quaternary structure, homodimer. Requires pyridoxal 5'-phosphate as cofactor.

The protein localises to the cytoplasm. It carries out the reaction (6R)-5,10-methylene-5,6,7,8-tetrahydrofolate + glycine + H2O = (6S)-5,6,7,8-tetrahydrofolate + L-serine. The protein operates within one-carbon metabolism; tetrahydrofolate interconversion. It participates in amino-acid biosynthesis; glycine biosynthesis; glycine from L-serine: step 1/1. Its function is as follows. Catalyzes the reversible interconversion of serine and glycine with tetrahydrofolate (THF) serving as the one-carbon carrier. This reaction serves as the major source of one-carbon groups required for the biosynthesis of purines, thymidylate, methionine, and other important biomolecules. Also exhibits THF-independent aldolase activity toward beta-hydroxyamino acids, producing glycine and aldehydes, via a retro-aldol mechanism. This chain is Serine hydroxymethyltransferase, found in Oceanobacillus iheyensis (strain DSM 14371 / CIP 107618 / JCM 11309 / KCTC 3954 / HTE831).